The primary structure comprises 568 residues: Phosphomethylpyrimidine synthase (568 aa).

Substrate contacts are provided by residues asparagine 188, methionine 217, tyrosine 246, histidine 282, 302 to 304 (SRG), 343 to 346 (DGLR), and glutamate 382. Histidine 386 is a Zn(2+) binding site. Tyrosine 409 lines the substrate pocket. Histidine 450 is a binding site for Zn(2+). Positions 530, 533, and 538 each coordinate [4Fe-4S] cluster.

Belongs to the ThiC family. As to quaternary structure, homodimer. It depends on [4Fe-4S] cluster as a cofactor.

It catalyses the reaction 5-amino-1-(5-phospho-beta-D-ribosyl)imidazole + S-adenosyl-L-methionine = 4-amino-2-methyl-5-(phosphooxymethyl)pyrimidine + CO + 5'-deoxyadenosine + formate + L-methionine + 3 H(+). It participates in cofactor biosynthesis; thiamine diphosphate biosynthesis. Functionally, catalyzes the synthesis of the hydroxymethylpyrimidine phosphate (HMP-P) moiety of thiamine from aminoimidazole ribotide (AIR) in a radical S-adenosyl-L-methionine (SAM)-dependent reaction. The sequence is that of Phosphomethylpyrimidine synthase from Idiomarina loihiensis (strain ATCC BAA-735 / DSM 15497 / L2-TR).